Reading from the N-terminus, the 249-residue chain is Phosphate import ATP-binding protein PstB 2 (249 aa).

One can recognise an ABC transporter domain in the interval 4–244 (FEVTHLNLFY…PKDHRTQGYV (241 aa)). Residue 36 to 43 (GPSGCGKS) participates in ATP binding.

The protein belongs to the ABC transporter superfamily. Phosphate importer (TC 3.A.1.7) family. The complex is composed of two ATP-binding proteins (PstB), two transmembrane proteins (PstC and PstA) and a solute-binding protein (PstS).

The protein resides in the cell inner membrane. The enzyme catalyses phosphate(out) + ATP + H2O = ADP + 2 phosphate(in) + H(+). Part of the ABC transporter complex PstSACB involved in phosphate import. Responsible for energy coupling to the transport system. The polypeptide is Phosphate import ATP-binding protein PstB 2 (Shewanella oneidensis (strain ATCC 700550 / JCM 31522 / CIP 106686 / LMG 19005 / NCIMB 14063 / MR-1)).